The sequence spans 550 residues: CTP synthase (550 aa).

The amidoligase domain stretch occupies residues 1–270 (MTKYVFVTGG…DRIICEELKL (270 aa)). Ser13 contributes to the CTP binding site. A UTP-binding site is contributed by Ser13. ATP-binding positions include 14–19 (SLGKGI) and Asp71. Mg(2+) is bound by residues Asp71 and Glu144. Residues 151–153 (DIE), 191–196 (KTKPTQ), and Lys227 contribute to the CTP site. Residues 191-196 (KTKPTQ) and Lys227 contribute to the UTP site. The Glutamine amidotransferase type-1 domain occupies 295–547 (TIGMVGKYVD…VEAALANKQA (253 aa)). Gly356 contacts L-glutamine. Cys383 acts as the Nucleophile; for glutamine hydrolysis in catalysis. L-glutamine contacts are provided by residues 384–387 (LGMQ), Glu407, and Arg473. Catalysis depends on residues His520 and Glu522.

This sequence belongs to the CTP synthase family. Homotetramer.

It catalyses the reaction UTP + L-glutamine + ATP + H2O = CTP + L-glutamate + ADP + phosphate + 2 H(+). It carries out the reaction L-glutamine + H2O = L-glutamate + NH4(+). The catalysed reaction is UTP + NH4(+) + ATP = CTP + ADP + phosphate + 2 H(+). It functions in the pathway pyrimidine metabolism; CTP biosynthesis via de novo pathway; CTP from UDP: step 2/2. Allosterically activated by GTP, when glutamine is the substrate; GTP has no effect on the reaction when ammonia is the substrate. The allosteric effector GTP functions by stabilizing the protein conformation that binds the tetrahedral intermediate(s) formed during glutamine hydrolysis. Inhibited by the product CTP, via allosteric rather than competitive inhibition. Functionally, catalyzes the ATP-dependent amination of UTP to CTP with either L-glutamine or ammonia as the source of nitrogen. Regulates intracellular CTP levels through interactions with the four ribonucleotide triphosphates. The protein is CTP synthase of Burkholderia lata (strain ATCC 17760 / DSM 23089 / LMG 22485 / NCIMB 9086 / R18194 / 383).